Reading from the N-terminus, the 515-residue chain is Maturase K (515 aa).

Belongs to the intron maturase 2 family. MatK subfamily.

The protein localises to the plastid. Its subcellular location is the chloroplast. In terms of biological role, usually encoded in the trnK tRNA gene intron. Probably assists in splicing its own and other chloroplast group II introns. The chain is Maturase K from Zingiber officinale (Ginger).